Consider the following 382-residue polypeptide: D-galactonate dehydratase (382 aa).

Asp183 is a Mg(2+) binding site. The active-site Proton donor is the His185. Residues Glu209 and Glu235 each contribute to the Mg(2+) site. His285 acts as the Proton acceptor in catalysis.

This sequence belongs to the mandelate racemase/muconate lactonizing enzyme family. GalD subfamily. The cofactor is Mg(2+).

The catalysed reaction is D-galactonate = 2-dehydro-3-deoxy-D-galactonate + H2O. The protein operates within carbohydrate acid metabolism; D-galactonate degradation; D-glyceraldehyde 3-phosphate and pyruvate from D-galactonate: step 1/3. Functionally, catalyzes the dehydration of D-galactonate to 2-keto-3-deoxy-D-galactonate. The protein is D-galactonate dehydratase of Escherichia coli (strain 55989 / EAEC).